Consider the following 543-residue polypeptide: Probable protein kinase UbiB (543 aa).

Residues 123 to 501 (DFDQQALASA…RVRQGQSRYL (379 aa)) enclose the Protein kinase domain. ATP contacts are provided by residues 129–137 (LASASIAQV) and K152. D287 (proton acceptor) is an active-site residue. 2 consecutive transmembrane segments (helical) span residues 498–518 (SRYL…LLSG) and 519–539 (DVEV…VIGW).

It belongs to the ABC1 family. UbiB subfamily.

It is found in the cell inner membrane. It functions in the pathway cofactor biosynthesis; ubiquinone biosynthesis [regulation]. Functionally, is probably a protein kinase regulator of UbiI activity which is involved in aerobic coenzyme Q (ubiquinone) biosynthesis. This chain is Probable protein kinase UbiB, found in Serratia proteamaculans (strain 568).